Consider the following 374-residue polypeptide: Alanine racemase (374 aa).

The Proton acceptor; specific for D-alanine role is filled by lysine 34. Residue lysine 34 is modified to N6-(pyridoxal phosphate)lysine. Arginine 147 contacts substrate. Tyrosine 271 acts as the Proton acceptor; specific for L-alanine in catalysis. Methionine 319 is a binding site for substrate.

It belongs to the alanine racemase family. Requires pyridoxal 5'-phosphate as cofactor.

It catalyses the reaction L-alanine = D-alanine. The protein operates within amino-acid biosynthesis; D-alanine biosynthesis; D-alanine from L-alanine: step 1/1. In terms of biological role, catalyzes the interconversion of L-alanine and D-alanine. May also act on other amino acids. The sequence is that of Alanine racemase (alr) from Actinobacillus pleuropneumoniae serotype 5b (strain L20).